Here is a 905-residue protein sequence, read N- to C-terminus: Lateral signaling target protein 2 homolog (905 aa).

Lys87 participates in a covalent cross-link: Glycyl lysine isopeptide (Lys-Gly) (interchain with G-Cter in ubiquitin). At Ser334 the chain carries Phosphoserine. A disordered region spans residues 354 to 441 (DEMSSLLSPP…RGQDGQSGEV (88 aa)). Composition is skewed to polar residues over residues 358–367 (SLLSPPSACQ) and 418–437 (PGNT…QDGQ). Thr512 is modified (phosphothreonine). 2 disordered regions span residues 516-552 (NPKS…DNSH) and 589-691 (PGSV…RGDV). Basic and acidic residues-rich tracts occupy residues 542–552 (PRAEGTGDNSH) and 605–615 (GGDKEPERIDE). Residues 647-656 (SGPQVDTASR) show a composition bias toward polar residues. Residues 659 to 678 (GEGEVKGQPEPEARKQDPEK) show a composition bias toward basic and acidic residues. An FYVE-type zinc finger spans residues 835–895 (DEACGFCTSC…VCTHCYMFHV (61 aa)). Zn(2+)-binding residues include Cys841, Cys844, Cys857, Cys860, Cys865, Cys868, and Cys887. Thr888 is subject to Phosphothreonine; by MAP2K. Cys890 is a binding site for Zn(2+).

The protein belongs to the lst-2 family. Interacts with TRIM3. Monoubiquitination at Lys-87 prevents binding to phosphatidylinositol 3-phosphate (PI3P) and localization to early endosome membranes. Enriched in brain (at protein level).

The protein localises to the cytoplasm. The protein resides in the cytosol. It localises to the early endosome membrane. Functionally, negative regulator of epidermal growth factor receptor (EGFR) signaling. Acts by promoting EGFR degradation in endosomes when not monoubiquitinated. In Mus musculus (Mouse), this protein is Lateral signaling target protein 2 homolog (Zfyve28).